The chain runs to 906 residues: Valine--tRNA ligase (906 aa).

Residues 43 to 53 (PNVTGSLHIGH) carry the 'HIGH' region motif. The 'KMSKS' region signature appears at 548-552 (KMSKS). K551 lines the ATP pocket. Positions 842–905 (EKARLTKDIA…EAALSRLASV (64 aa)) form a coiled coil.

Belongs to the class-I aminoacyl-tRNA synthetase family. ValS type 1 subfamily. As to quaternary structure, monomer.

The protein localises to the cytoplasm. The enzyme catalyses tRNA(Val) + L-valine + ATP = L-valyl-tRNA(Val) + AMP + diphosphate. Catalyzes the attachment of valine to tRNA(Val). As ValRS can inadvertently accommodate and process structurally similar amino acids such as threonine, to avoid such errors, it has a 'posttransfer' editing activity that hydrolyzes mischarged Thr-tRNA(Val) in a tRNA-dependent manner. The sequence is that of Valine--tRNA ligase from Caulobacter vibrioides (strain ATCC 19089 / CIP 103742 / CB 15) (Caulobacter crescentus).